The following is a 150-amino-acid chain: Calmodulin (150 aa).

4 consecutive EF-hand domains span residues 9-44, 45-80, 82-117, and 118-150; these read EQIAEFREAFSLFDRDQDGNITSNELGVVMRSLGQS, PTAAELQDMINEVDADGNGTIDFTEFLTMMARKMKD, DNEEEVREAFKVFDKDGNGYITVEELTHVLTSLGER, and LSQEEVADMIREADTDGDGVINYEEFSRVISSK. Ca(2+) contacts are provided by Asp-22, Asp-24, Asp-26, Asn-28, Glu-33, Asp-58, Asp-60, Asn-62, Thr-64, Glu-69, Asp-95, Asp-97, Asn-99, Tyr-101, Glu-106, Asp-131, Asp-133, Asp-135, and Glu-142.

Belongs to the calmodulin family. Interacts with rng2.

It is found in the cytoplasm. The protein resides in the cytoskeleton. The protein localises to the microtubule organizing center. Its subcellular location is the spindle pole body. In terms of biological role, calmodulin mediates the control of a large number of enzymes, ion channels and other proteins by Ca(2+). Among the enzymes to be stimulated by the calmodulin-Ca(2+) complex are a number of protein kinases and phosphatases. The sequence is that of Calmodulin (cam1) from Schizosaccharomyces pombe (strain 972 / ATCC 24843) (Fission yeast).